The chain runs to 129 residues: Large-conductance mechanosensitive channel (129 aa).

2 consecutive transmembrane segments (helical) span residues 10-30 (FAVK…GAFG) and 70-90 (AVML…VIAI).

It belongs to the MscL family. In terms of assembly, homopentamer.

It is found in the cell inner membrane. In terms of biological role, channel that opens in response to stretch forces in the membrane lipid bilayer. May participate in the regulation of osmotic pressure changes within the cell. The sequence is that of Large-conductance mechanosensitive channel from Actinobacillus pleuropneumoniae serotype 3 (strain JL03).